Reading from the N-terminus, the 506-residue chain is Glutamyl-tRNA(Gln) amidotransferase subunit A, mitochondrial (506 aa).

Catalysis depends on charge relay system residues lysine 62 and serine 141. Residue serine 165 is the Acyl-ester intermediate of the active site.

The protein belongs to the amidase family. GatA subfamily. As to quaternary structure, subunit of the heterotrimeric GatCAB amidotransferase (AdT) complex, composed of A, B and C subunits.

It localises to the mitochondrion. The catalysed reaction is L-glutamyl-tRNA(Gln) + L-glutamine + ATP + H2O = L-glutaminyl-tRNA(Gln) + L-glutamate + ADP + phosphate + H(+). Allows the formation of correctly charged Gln-tRNA(Gln) through the transamidation of misacylated Glu-tRNA(Gln) in the mitochondria. The reaction takes place in the presence of glutamine and ATP through an activated gamma-phospho-Glu-tRNA(Gln). In Emericella nidulans (strain FGSC A4 / ATCC 38163 / CBS 112.46 / NRRL 194 / M139) (Aspergillus nidulans), this protein is Glutamyl-tRNA(Gln) amidotransferase subunit A, mitochondrial.